Reading from the N-terminus, the 606-residue chain is Adenine deaminase (606 aa).

It belongs to the metallo-dependent hydrolases superfamily. Adenine deaminase family. It depends on Mn(2+) as a cofactor.

The enzyme catalyses adenine + H2O + H(+) = hypoxanthine + NH4(+). The sequence is that of Adenine deaminase from Rubrobacter xylanophilus (strain DSM 9941 / JCM 11954 / NBRC 16129 / PRD-1).